The primary structure comprises 536 residues: ADP,ATP carrier protein 4 (536 aa).

The next 9 membrane-spanning stretches (helical) occupy residues valine 44–leucine 64, serine 77–valine 97, methionine 109–tryptophan 129, threonine 172–alanine 194, lysine 205–threonine 225, phenylalanine 244–phenylalanine 264, valine 309–leucine 329, alanine 349–isoleucine 369, and alanine 378–phenylalanine 398. N-linked (GlcNAc...) asparagine glycosylation is found at asparagine 400 and asparagine 421. Helical transmembrane passes span leucine 465–phenylalanine 485 and valine 493–leucine 513.

Belongs to the ADP/ATP translocase tlc family.

It localises to the cell membrane. Its function is as follows. ATP transporter involved in the uptake of ATP from the host cell cytoplasm. Provides the microsporidian cell with host ATP in exchange for ADP. This is an obligate exchange system. This energy acquiring activity is an important component of microsporidian parasitism. This Encephalitozoon cuniculi (strain GB-M1) (Microsporidian parasite) protein is ADP,ATP carrier protein 4 (NTT4).